A 78-amino-acid chain; its full sequence is Small ribosomal subunit protein bS18A (78 aa).

It belongs to the bacterial ribosomal protein bS18 family. As to quaternary structure, part of the 30S ribosomal subunit. Forms a tight heterodimer with protein bS6.

In terms of biological role, binds as a heterodimer with protein bS6 to the central domain of the 16S rRNA, where it helps stabilize the platform of the 30S subunit. The polypeptide is Small ribosomal subunit protein bS18A (Streptomyces avermitilis (strain ATCC 31267 / DSM 46492 / JCM 5070 / NBRC 14893 / NCIMB 12804 / NRRL 8165 / MA-4680)).